We begin with the raw amino-acid sequence, 352 residues long: tRNA pseudouridine synthase D (352 aa).

Aspartate 78 serves as the catalytic Nucleophile. The region spanning 153 to 299 is the TRUD domain; sequence GVPNYYGEQR…LDQDRRPLLL (147 aa).

This sequence belongs to the pseudouridine synthase TruD family.

It catalyses the reaction uridine(13) in tRNA = pseudouridine(13) in tRNA. Functionally, responsible for synthesis of pseudouridine from uracil-13 in transfer RNAs. In Aeromonas hydrophila subsp. hydrophila (strain ATCC 7966 / DSM 30187 / BCRC 13018 / CCUG 14551 / JCM 1027 / KCTC 2358 / NCIMB 9240 / NCTC 8049), this protein is tRNA pseudouridine synthase D.